Here is a 334-residue protein sequence, read N- to C-terminus: Glycerol-3-phosphate dehydrogenase [NAD(P)+] (334 aa).

Residues Tyr-14 and Lys-108 each contribute to the NADPH site. The sn-glycerol 3-phosphate site is built by Lys-108, Gly-140, and Ser-142. Ala-144 is a binding site for NADPH. Lys-195, Asp-248, Ser-258, Arg-259, and Asn-260 together coordinate sn-glycerol 3-phosphate. Catalysis depends on Lys-195, which acts as the Proton acceptor. Arg-259 is an NADPH binding site. An NADPH-binding site is contributed by Glu-285.

The protein belongs to the NAD-dependent glycerol-3-phosphate dehydrogenase family.

It localises to the cytoplasm. It catalyses the reaction sn-glycerol 3-phosphate + NAD(+) = dihydroxyacetone phosphate + NADH + H(+). It carries out the reaction sn-glycerol 3-phosphate + NADP(+) = dihydroxyacetone phosphate + NADPH + H(+). Its pathway is membrane lipid metabolism; glycerophospholipid metabolism. In terms of biological role, catalyzes the reduction of the glycolytic intermediate dihydroxyacetone phosphate (DHAP) to sn-glycerol 3-phosphate (G3P), the key precursor for phospholipid synthesis. The polypeptide is Glycerol-3-phosphate dehydrogenase [NAD(P)+] (Mesoplasma florum (strain ATCC 33453 / NBRC 100688 / NCTC 11704 / L1) (Acholeplasma florum)).